A 79-amino-acid polypeptide reads, in one-letter code: Small ribosomal subunit protein bS18 (79 aa).

This sequence belongs to the bacterial ribosomal protein bS18 family. In terms of assembly, part of the 30S ribosomal subunit. Forms a tight heterodimer with protein bS6.

Functionally, binds as a heterodimer with protein bS6 to the central domain of the 16S rRNA, where it helps stabilize the platform of the 30S subunit. The chain is Small ribosomal subunit protein bS18 (rpsR) from Bacillus subtilis (strain 168).